Reading from the N-terminus, the 148-residue chain is Protein TIFY 5B (148 aa).

The region spanning 54–89 (PKQESQILTIFYNGHMCVSSDLTHLEANAILSLASR) is the Tify domain.

This sequence belongs to the TIFY/JAZ family. In terms of processing, ubiquitinated. Targeted for degradation by the SCF(COI1) E3 ubiquitin ligase-proteasome pathway during jasmonate signaling.

It localises to the nucleus. Functionally, repressor of jasmonate responses. This is Protein TIFY 5B (TIFY 5B) from Arabidopsis thaliana (Mouse-ear cress).